Consider the following 454-residue polypeptide: GTPase Der (454 aa).

EngA-type G domains follow at residues 4-168 (PQVA…PEKD) and 178-352 (MKIA…KQAQ). Residues 10-17 (GRPNVGKS), 57-61 (DTGGM), 120-123 (NKAD), 184-191 (GRRNVGKS), 231-235 (DTPGL), and 296-299 (NKWD) each bind GTP. A KH-like domain is found at 353-437 (SRVSTGELNR…PIKLYMQQRS (85 aa)).

It belongs to the TRAFAC class TrmE-Era-EngA-EngB-Septin-like GTPase superfamily. EngA (Der) GTPase family. Associates with the 50S ribosomal subunit.

In terms of biological role, GTPase that plays an essential role in the late steps of ribosome biogenesis. The chain is GTPase Der from Rhodopirellula baltica (strain DSM 10527 / NCIMB 13988 / SH1).